A 477-amino-acid polypeptide reads, in one-letter code: Methylenetetrahydrofolate--tRNA-(uracil-5-)-methyltransferase TrmFO (477 aa).

15-20 (GAGLAG) lines the FAD pocket.

Belongs to the MnmG family. TrmFO subfamily. It depends on FAD as a cofactor.

The protein localises to the cytoplasm. The enzyme catalyses uridine(54) in tRNA + (6R)-5,10-methylene-5,6,7,8-tetrahydrofolate + NADH + H(+) = 5-methyluridine(54) in tRNA + (6S)-5,6,7,8-tetrahydrofolate + NAD(+). It carries out the reaction uridine(54) in tRNA + (6R)-5,10-methylene-5,6,7,8-tetrahydrofolate + NADPH + H(+) = 5-methyluridine(54) in tRNA + (6S)-5,6,7,8-tetrahydrofolate + NADP(+). Its function is as follows. Catalyzes the folate-dependent formation of 5-methyl-uridine at position 54 (M-5-U54) in all tRNAs. The polypeptide is Methylenetetrahydrofolate--tRNA-(uracil-5-)-methyltransferase TrmFO (Nitrobacter hamburgensis (strain DSM 10229 / NCIMB 13809 / X14)).